The sequence spans 183 residues: uncharacterized protein (183 aa).

A signal peptide spans 1–29 (MQCWQQPFLRFLQQPFFLATASLAGSSSS). Positions 149 to 183 (PGSTCDGSLKGRAYPSCVPKRDPEHSREESHPLSG) are disordered. The segment covering 167 to 183 (PKRDPEHSREESHPLSG) has biased composition (basic and acidic residues).

Its subcellular location is the secreted. This is an uncharacterized protein from Homo sapiens (Human).